A 292-amino-acid chain; its full sequence is Protein LicB (292 aa).

2 EamA domains span residues 70-139 and 160-286; these read ALSG…LLAI and LGWS…VTLY.

In Haemophilus influenzae (strain ATCC 51907 / DSM 11121 / KW20 / Rd), this protein is Protein LicB (licB).